A 302-amino-acid polypeptide reads, in one-letter code: Short-chain dehydrogenase/reductase 1 (302 aa).

Residues 20 to 23, Arg43, 71 to 72, and Asn98 each bind NADP(+); these read NKGL and DV. Residue Ser170 coordinates substrate. Residues Tyr226, Lys230, and 257 to 262 contribute to the NADP(+) site; that span reads VKTDIN. The active-site Proton acceptor is the Tyr226.

The protein belongs to the short-chain dehydrogenases/reductases (SDR) family. In terms of tissue distribution, mainly expressed in flowers and flower buds, to a lesser extent in leaves and, at low levels, in stems and roots.

It functions in the pathway secondary metabolite biosynthesis; terpenoid biosynthesis. Component of the oleanane-type triterpene saponins (e.g. saponarioside A and saponarioside B) biosynthetic pathway, leading to the production of natural products with detergent properties used as traditional sources of soap. A dehydrogenase/reductase that, together with UGT74CD1, mediates the conversion of QA-tri to QA-triF; UGT74CD1 may transfer 4-keto-6-deoxy-glucose to QA-tri, which is in turn reduced to D-fucose by SDR1, thus leading to QA-triF formation via the initiation of the C-28 sugar chain. This chain is Short-chain dehydrogenase/reductase 1, found in Saponaria officinalis (Common soapwort).